The primary structure comprises 100 residues: Urease subunit gamma (100 aa).

The protein belongs to the urease gamma subunit family. As to quaternary structure, heterotrimer of UreA (gamma), UreB (beta) and UreC (alpha) subunits. Three heterotrimers associate to form the active enzyme.

The protein resides in the cytoplasm. The catalysed reaction is urea + 2 H2O + H(+) = hydrogencarbonate + 2 NH4(+). The protein operates within nitrogen metabolism; urea degradation; CO(2) and NH(3) from urea (urease route): step 1/1. The protein is Urease subunit gamma of Ruegeria sp. (strain TM1040) (Silicibacter sp.).